An 86-amino-acid polypeptide reads, in one-letter code: Small ribosomal subunit protein bS18 (86 aa).

This sequence belongs to the bacterial ribosomal protein bS18 family. Part of the 30S ribosomal subunit. Forms a tight heterodimer with protein bS6.

Binds as a heterodimer with protein bS6 to the central domain of the 16S rRNA, where it helps stabilize the platform of the 30S subunit. The protein is Small ribosomal subunit protein bS18 of Campylobacter fetus subsp. fetus (strain 82-40).